A 243-amino-acid polypeptide reads, in one-letter code: uncharacterized protein (243 aa).

The signal sequence occupies residues 1–19; sequence MKSLPLLGILAFAANRLSA. Asparagine 112 and asparagine 206 each carry an N-linked (GlcNAc...) asparagine glycan.

This is an uncharacterized protein from Encephalitozoon cuniculi (strain GB-M1) (Microsporidian parasite).